A 741-amino-acid chain; its full sequence is Catalase-peroxidase 2 (741 aa).

A signal peptide spans 1 to 28 (MQKKRIGKSVVAALAIIAMSAGTVAAWA). Residues 107-228 (WHGAGTYRTY…LAATQMGLIY (122 aa)) constitute a cross-link (tryptophyl-tyrosyl-methioninium (Trp-Tyr) (with M-254)). The active-site Proton acceptor is His108. The tryptophyl-tyrosyl-methioninium (Tyr-Met) (with W-107) cross-link spans 228-254 (YVNPEGPNGNPDPVAAAKDIREAFGRM). His269 contacts heme b.

This sequence belongs to the peroxidase family. Peroxidase/catalase subfamily. Homodimer or homotetramer. Heme b is required as a cofactor. In terms of processing, formation of the three residue Trp-Tyr-Met cross-link is important for the catalase, but not the peroxidase activity of the enzyme.

It carries out the reaction H2O2 + AH2 = A + 2 H2O. The enzyme catalyses 2 H2O2 = O2 + 2 H2O. In terms of biological role, bifunctional enzyme with both catalase and broad-spectrum peroxidase activity. The chain is Catalase-peroxidase 2 from Burkholderia ambifaria (strain MC40-6).